Reading from the N-terminus, the 168-residue chain is METPESEKTRFEVECEFVQALANPNYLNFLAQRGYFKEEYFVNYLKYLLYWKNPQYARCLKFPQCLHMLEALQSQQFRDAMAYGPSAKFVEDQVVLQWQFYLRKRHRLCMLPEGEDQDVEESEEETVENEQKESEDEEDVVIVEKPEDEQEEQAEEAAEPTDTSLLNT.

Acidic residues predominate over residues E113–E159. The tract at residues E113–T168 is disordered.

The protein belongs to the Mediator complex subunit 31 family. Component of the Mediator complex.

It localises to the nucleus. Component of the Mediator complex, a coactivator involved in the regulated transcription of nearly all RNA polymerase II-dependent genes. Mediator functions as a bridge to convey information from gene-specific regulatory proteins to the basal RNA polymerase II transcription machinery. Mediator is recruited to promoters by direct interactions with regulatory proteins and serves as a scaffold for the assembly of a functional preinitiation complex with RNA polymerase II and the general transcription factors. This is Mediator of RNA polymerase II transcription subunit 31 (mdt-31) from Caenorhabditis briggsae.